The chain runs to 417 residues: Tyrosine--tRNA ligase (417 aa).

Residue Tyr-39 participates in L-tyrosine binding. The 'HIGH' region signature appears at 44-53 (PTAASLHAGG). Residues Tyr-176 and Gln-180 each coordinate L-tyrosine. Positions 236 to 240 (KMGKS) match the 'KMSKS' region motif. ATP is bound at residue Lys-239. Residues 350–417 (LGLLTLLVRA…KKKHLLVRPV (68 aa)) enclose the S4 RNA-binding domain.

The protein belongs to the class-I aminoacyl-tRNA synthetase family. TyrS type 1 subfamily. In terms of assembly, homodimer.

It localises to the cytoplasm. The enzyme catalyses tRNA(Tyr) + L-tyrosine + ATP = L-tyrosyl-tRNA(Tyr) + AMP + diphosphate + H(+). Catalyzes the attachment of tyrosine to tRNA(Tyr) in a two-step reaction: tyrosine is first activated by ATP to form Tyr-AMP and then transferred to the acceptor end of tRNA(Tyr). This chain is Tyrosine--tRNA ligase, found in Rhizobium meliloti (strain 1021) (Ensifer meliloti).